A 512-amino-acid polypeptide reads, in one-letter code: 3-ketoacyl-CoA synthase 9 (512 aa).

The next 2 membrane-spanning stretches (helical) occupy residues 44 to 64 (LITH…VTEI) and 83 to 103 (LVAF…YIMS). Positions 100-389 (YIMSRPRSVY…FFMTLVTKKL (290 aa)) constitute an FAE domain. Catalysis depends on residues Cys-244, His-323, His-407, His-411, His-440, and Asn-444.

The protein belongs to the thiolase-like superfamily. Chalcone/stilbene synthases family. In terms of tissue distribution, expressed in seedlings, stems, leaves, flowers and siliques. Expressed in roots, leaves, and stems, including epidermis, silique walls, sepals, the upper portion of the styles, and seed coats, but not in developing embryos.

It localises to the endoplasmic reticulum membrane. It carries out the reaction a very-long-chain acyl-CoA + malonyl-CoA + H(+) = a very-long-chain 3-oxoacyl-CoA + CO2 + CoA. The protein operates within lipid metabolism; fatty acid biosynthesis. In terms of biological role, involved in the elongation of C22 to C24 fatty acids, which are precursors for the biosynthesis of cuticular waxes, aliphatic suberins, and membrane lipids, including sphingolipids and phospholipids. This Arabidopsis thaliana (Mouse-ear cress) protein is 3-ketoacyl-CoA synthase 9.